The primary structure comprises 346 residues: Sulfate/thiosulfate import ATP-binding protein CysA 1 (346 aa).

Residues 3–237 (VKVSGITKQF…PNSPFVFSFI (235 aa)) form the ABC transporter domain. 35 to 42 (GPSGSGKT) serves as a coordination point for ATP.

This sequence belongs to the ABC transporter superfamily. Sulfate/tungstate importer (TC 3.A.1.6) family. In terms of assembly, the complex is composed of two ATP-binding proteins (CysA), two transmembrane proteins (CysT and CysW) and a solute-binding protein (CysP).

The protein localises to the cell inner membrane. It carries out the reaction sulfate(out) + ATP + H2O = sulfate(in) + ADP + phosphate + H(+). It catalyses the reaction thiosulfate(out) + ATP + H2O = thiosulfate(in) + ADP + phosphate + H(+). Its function is as follows. Part of the ABC transporter complex CysAWTP involved in sulfate/thiosulfate import. Responsible for energy coupling to the transport system. The sequence is that of Sulfate/thiosulfate import ATP-binding protein CysA 1 from Agrobacterium fabrum (strain C58 / ATCC 33970) (Agrobacterium tumefaciens (strain C58)).